Consider the following 527-residue polypeptide: MGFQVWQKGLCVLCFSLIFICGVIGEETTIVKIEENPVAQTDENYVCATLDLWPPTKCNYGNCPWGKSSFLNLDLNNNIIRNAVKEFAPLKLRFGGTLQDRLVYQTSRDEPCDSTFYNNTNLILDFSHACLSLDRWDEINQFILETGSEAVFGLNALRGKTVEIKGIIKDGQYLGETTTAVGEWDYSNSKFLIEYSLKKGYKHIRGWTLGNELGGHTLFIGVSPEDYANDAKKLHELVKEIYQDQGTMPLIIAPGAIFDLEWYTEFIDRTPELHVATHHMYNLGSGGDDALKDVLLTASFFDEATKSMYEGLQKIVNRPGTKAVAWIGEAGGAFNSGQDGISNTFINGFWYLNMLGYSALLDTKTFCRQTLTGGNYGLLQTGTYIPNPDYYSALLWHRLMGSKVLKTEIVGTKNVYIYAHCAKKSNGITMLVLNHDGESSVKISLDPSKYGSKREEYHLTPVNNNLQSRLVKLNGELLHLDPSGVIPALNPVEKDNSKQLEVAPYSFMFVHLPGPTMFSACEKPAGK.

Residues M1–G25 form the signal peptide. The Proton donor role is filled by E212. Catalysis depends on E329, which acts as the Nucleophile.

Belongs to the glycosyl hydrolase 79 family. Homotetramer.

The catalysed reaction is baicalin + H2O = baicalein + D-glucuronate + H(+). Its function is as follows. Beta-glucuronidase involved in the initiation of H(2)O(2) metabolism via the production of baicalein. Unable to use glycyrrhizin, gypsogenin-3-O-D-glucuronide, luteolin-7-O-D-glucoside and apigenin-7-O-D-glucoside as substrates. This Scutellaria baicalensis (Baical skullcap) protein is Baicalin-beta-D-glucuronidase (SGUS).